A 363-amino-acid chain; its full sequence is Protein RecA (363 aa).

66–73 (GPESSGKT) contacts ATP. The tract at residues 327–363 (YGIDEKSIADRENPEKIKEKREETSEENKTDNSEKTK) is disordered. Positions 329–363 (IDEKSIADRENPEKIKEKREETSEENKTDNSEKTK) are enriched in basic and acidic residues.

This sequence belongs to the RecA family.

The protein localises to the cytoplasm. Its function is as follows. Can catalyze the hydrolysis of ATP in the presence of single-stranded DNA, the ATP-dependent uptake of single-stranded DNA by duplex DNA, and the ATP-dependent hybridization of homologous single-stranded DNAs. It interacts with LexA causing its activation and leading to its autocatalytic cleavage. The sequence is that of Protein RecA from Lactobacillus acidophilus (strain ATCC 700396 / NCK56 / N2 / NCFM).